The chain runs to 101 residues: Small ribosomal subunit protein uS14c (101 aa).

The protein belongs to the universal ribosomal protein uS14 family. Part of the 30S ribosomal subunit.

It is found in the plastid. Functionally, binds 16S rRNA, required for the assembly of 30S particles. This chain is Small ribosomal subunit protein uS14c, found in Helicosporidium sp. subsp. Simulium jonesii (Green alga).